Consider the following 257-residue polypeptide: UPF0246 protein YaaA (257 aa).

The protein belongs to the UPF0246 family.

This chain is UPF0246 protein YaaA, found in Salmonella arizonae (strain ATCC BAA-731 / CDC346-86 / RSK2980).